Reading from the N-terminus, the 556-residue chain is RING finger protein 207 (556 aa).

An RING-type zinc finger spans residues 25 to 64; it reads CPLCHAQYERPCLLDCFHEFCAGCLRGRAADGRLACPLCQ. Residues 93 to 145 form a B box-type; atypical zinc finger; the sequence is TEVVRCANCDLECGKQDAETTYFCNTCGQPLCARCRDETHRARMFARHDIVAL. The Zn(2+) site is built by C98, C101, C127, and H132. 2 coiled-coil regions span residues 218–273 and 385–425; these read TREA…NKAE and FTEH…SLIK. Residues 517–556 form a disordered region; sequence FQVPVDEPSDHPQNTHDDGVNAEAPARVSTLKPAMEKEVS. The span at 524-535 shows a compositional bias: basic and acidic residues; sequence PSDHPQNTHDDG.

In terms of assembly, interacts with the core-glycosylated, but not the fully glycosylated form of KCNH2/HERG. Interacts with DNAJA1 and HSPA8. Interacts (via the C-terminus) with HSPA1A; this interaction additively increases KCNH2 expression.

It localises to the cytoplasm. Functionally, plays a role in cardiac repolarization possibly by stabilizing membrane expression of the potassium channel KCNH2/HERG, or by assisting its synthesis, folding or export from the endoplasmic reticulum, in a heat shock protein-dependent manner. The sequence is that of RING finger protein 207 (RNF207) from Bos taurus (Bovine).